An 85-amino-acid chain; its full sequence is Translation initiation factor IF-1 1 (85 aa).

One can recognise an S1-like domain in the interval methionine 1–isoleucine 72.

The protein belongs to the IF-1 family. As to quaternary structure, component of the 30S ribosomal translation pre-initiation complex which assembles on the 30S ribosome in the order IF-2 and IF-3, IF-1 and N-formylmethionyl-tRNA(fMet); mRNA recruitment can occur at any time during PIC assembly.

Its subcellular location is the cytoplasm. In terms of biological role, one of the essential components for the initiation of protein synthesis. Stabilizes the binding of IF-2 and IF-3 on the 30S subunit to which N-formylmethionyl-tRNA(fMet) subsequently binds. Helps modulate mRNA selection, yielding the 30S pre-initiation complex (PIC). Upon addition of the 50S ribosomal subunit IF-1, IF-2 and IF-3 are released leaving the mature 70S translation initiation complex. The polypeptide is Translation initiation factor IF-1 1 (Paracidovorax citrulli (strain AAC00-1) (Acidovorax citrulli)).